A 404-amino-acid chain; its full sequence is Cysteine desulfurase IscS (404 aa).

Residues Ala-75–Thr-76, Asn-155, Gln-183, and Ser-203–His-205 contribute to the pyridoxal 5'-phosphate site. An N6-(pyridoxal phosphate)lysine modification is found at Lys-206. Residue Thr-243 coordinates pyridoxal 5'-phosphate. Cys-328 functions as the Cysteine persulfide intermediate in the catalytic mechanism. Cys-328 lines the [2Fe-2S] cluster pocket.

This sequence belongs to the class-V pyridoxal-phosphate-dependent aminotransferase family. NifS/IscS subfamily. As to quaternary structure, homodimer. Forms a heterotetramer with IscU, interacts with other sulfur acceptors. Pyridoxal 5'-phosphate is required as a cofactor.

The protein localises to the cytoplasm. The catalysed reaction is (sulfur carrier)-H + L-cysteine = (sulfur carrier)-SH + L-alanine. It participates in cofactor biosynthesis; iron-sulfur cluster biosynthesis. In terms of biological role, master enzyme that delivers sulfur to a number of partners involved in Fe-S cluster assembly, tRNA modification or cofactor biosynthesis. Catalyzes the removal of elemental sulfur and selenium atoms from cysteine and selenocysteine to produce alanine. Functions as a sulfur delivery protein for Fe-S cluster synthesis onto IscU, an Fe-S scaffold assembly protein, as well as other S acceptor proteins. Also functions as a selenium delivery protein in the pathway for the biosynthesis of selenophosphate. The polypeptide is Cysteine desulfurase IscS (Salmonella schwarzengrund (strain CVM19633)).